A 216-amino-acid chain; its full sequence is 3-keto-L-gulonate-6-phosphate decarboxylase UlaD (216 aa).

Asp11 contacts substrate. Positions 33 and 62 each coordinate Mg(2+). Substrate is bound at residue Arg192.

This sequence belongs to the HPS/KGPDC family. KGPDC subfamily. As to quaternary structure, homodimer. Mg(2+) serves as cofactor.

It carries out the reaction 3-dehydro-L-gulonate 6-phosphate + H(+) = L-xylulose 5-phosphate + CO2. Its pathway is cofactor degradation; L-ascorbate degradation; D-xylulose 5-phosphate from L-ascorbate: step 2/4. Functionally, catalyzes the decarboxylation of 3-keto-L-gulonate-6-P into L-xylulose-5-P. Is involved in the anaerobic L-ascorbate utilization. The polypeptide is 3-keto-L-gulonate-6-phosphate decarboxylase UlaD (Escherichia coli O139:H28 (strain E24377A / ETEC)).